The sequence spans 250 residues: Probable transcriptional regulatory protein Cvib_1432 (250 aa).

It belongs to the TACO1 family.

Its subcellular location is the cytoplasm. This is Probable transcriptional regulatory protein Cvib_1432 from Chlorobium phaeovibrioides (strain DSM 265 / 1930) (Prosthecochloris vibrioformis (strain DSM 265)).